Consider the following 73-residue polypeptide: Translational regulator CsrA (73 aa).

The protein belongs to the CsrA/RsmA family. As to quaternary structure, homodimer; the beta-strands of each monomer intercalate to form a hydrophobic core, while the alpha-helices form wings that extend away from the core.

Its subcellular location is the cytoplasm. A translational regulator that binds mRNA to regulate translation initiation and/or mRNA stability. Usually binds in the 5'-UTR at or near the Shine-Dalgarno sequence preventing ribosome-binding, thus repressing translation. Its main target seems to be the major flagellin gene, while its function is anatagonized by FliW. This Clostridium acetobutylicum (strain ATCC 824 / DSM 792 / JCM 1419 / IAM 19013 / LMG 5710 / NBRC 13948 / NRRL B-527 / VKM B-1787 / 2291 / W) protein is Translational regulator CsrA.